The following is a 192-amino-acid chain: Phosphoheptose isomerase (192 aa).

An SIS domain is found at 35 to 192 (LIETLENQGK…CIERHFANKN (158 aa)). Residue 50-52 (NGG) participates in substrate binding. His-59 and Glu-63 together coordinate Zn(2+). Residues Glu-63, 92–93 (ND), 118–120 (STS), Ser-123, and Gln-170 each bind substrate. Zn(2+) is bound by residues Gln-170 and His-178.

This sequence belongs to the SIS family. GmhA subfamily. In terms of assembly, homotetramer. Zn(2+) serves as cofactor.

Its subcellular location is the cytoplasm. It catalyses the reaction 2 D-sedoheptulose 7-phosphate = D-glycero-alpha-D-manno-heptose 7-phosphate + D-glycero-beta-D-manno-heptose 7-phosphate. The protein operates within carbohydrate biosynthesis; D-glycero-D-manno-heptose 7-phosphate biosynthesis; D-glycero-alpha-D-manno-heptose 7-phosphate and D-glycero-beta-D-manno-heptose 7-phosphate from sedoheptulose 7-phosphate: step 1/1. Its function is as follows. Catalyzes the isomerization of sedoheptulose 7-phosphate in D-glycero-D-manno-heptose 7-phosphate. The polypeptide is Phosphoheptose isomerase (Helicobacter pylori (strain Shi470)).